We begin with the raw amino-acid sequence, 296 residues long: tRNA dimethylallyltransferase (296 aa).

11–18 is a binding site for ATP; the sequence is GPTAVGKT. 13 to 18 contributes to the substrate binding site; it reads TAVGKT. The segment at 36–39 is interaction with substrate tRNA; the sequence is DSQQ.

Belongs to the IPP transferase family. In terms of assembly, monomer. Mg(2+) is required as a cofactor.

It catalyses the reaction adenosine(37) in tRNA + dimethylallyl diphosphate = N(6)-dimethylallyladenosine(37) in tRNA + diphosphate. In terms of biological role, catalyzes the transfer of a dimethylallyl group onto the adenine at position 37 in tRNAs that read codons beginning with uridine, leading to the formation of N6-(dimethylallyl)adenosine (i(6)A). In Streptococcus agalactiae serotype III (strain NEM316), this protein is tRNA dimethylallyltransferase.